The sequence spans 423 residues: F-box/LRR-repeat protein 2 (423 aa).

An F-box domain is found at Gly9–Ile55. LRR repeat units lie at residues Gln61–Gly87, Cys88–Gly113, Cys114–Ser139, Cys140–Trp165, Cys166–Gly191, Cys192–Ser217, Cys218–Gly243, Cys244–Arg269, Cys270–Glu295, Cys296–His321, Cys322–Asn350, Cys351–Asp375, and Cys376–Ala401. The interval Leu80–Gly90 is interaction with Calmodulin. A Glycyl lysine isopeptide (Lys-Gly) (interchain with G-Cter in ubiquitin) cross-link involves residue Lys201. Thr404 is subject to Phosphothreonine. Residue Cys420 is the site of S-geranylgeranyl cysteine attachment. A CAAX motif motif is present at residues Cys420–Leu423.

As to quaternary structure, part of the SCF (SKP1-CUL1-F-box) E3 ubiquitin-protein ligase complex SCF(FBXL2) composed of CUL1, SKP1, RBX1 and FBXL2. Interacts with calmodulin; may antagonize substrate ubiquitination by SCF(FBXL2). May interact with PIK3R1. Interacts with PTPN13. Post-translationally, phosphorylated by GSK-beta (GSK3B), promoting recognition by FBXO3, leading to its ubiquitination by the SCF(FBXO3) complex. Ubiquitinated at Lys-201 by the SCF(FBXO3) complex in response to lipopolysaccharide (LPS), leading to its degradation by the proteasome.

It localises to the membrane. The protein operates within protein modification; protein ubiquitination. In terms of biological role, calcium-activated substrate recognition component of the SCF (SKP1-cullin-F-box protein) E3 ubiquitin-protein ligase complex, SCF(FBXL2), which mediates the ubiquitination and subsequent proteasomal degradation of target proteins. Unlike many F-box proteins, FBXL2 does not seem to target phosphodegron within its substrates but rather calmodulin-binding motifs and is thereby antagonized by calmodulin. This is the case for the cyclins CCND2 and CCND3 which polyubiquitination and subsequent degradation are inhibited by calmodulin. Through CCND2 and CCND3 degradation induces cell-cycle arrest in G(0). SCF(FBXL2) also mediates PIK3R2 ubiquitination and proteasomal degradation thereby regulating phosphatidylinositol 3-kinase signaling and autophagy. PCYT1A monoubiquitination by SCF(FBXL2) and subsequent degradation regulates synthesis of phosphatidylcholine, which is utilized for formation of membranes and of pulmonary surfactant. The SCF(FBXL2) complex acts as a regulator of inflammation by mediating ubiquitination and degradation of TRAF proteins (TRAF1, TRAF2, TRAF3, TRAF4, TRAF5 and TRAF6). The SCF(FBXL2) complex acts as a negative regulator of the NLRP3 inflammasome by mediating ubiquitination and degradation of NLRP3. In Bos taurus (Bovine), this protein is F-box/LRR-repeat protein 2.